The chain runs to 300 residues: ADP-ribosyl cyclase/cyclic ADP-ribose hydrolase 1 (300 aa).

At 1 to 21 (MANCEFSPVSGDKPCCRLSRR) the chain is on the cytoplasmic side. The chain crosses the membrane as a helical; Signal-anchor for type II membrane protein span at residues 22-42 (AQLCLGVSILVLILVVVLAVV). The Extracellular portion of the chain corresponds to 43 to 300 (VPRWRQQWSG…PEDSSCTSEI (258 aa)). 3 disulfide bridges follow: Cys-67-Cys-82, Cys-99-Cys-180, and Cys-160-Cys-173. N-linked (GlcNAc...) asparagine glycosylation is present at Asn-100. Cys-119 is an active-site residue. N-linked (GlcNAc...) asparagine glycosylation occurs at Asn-164. Cys-201 is a catalytic residue. N-linked (GlcNAc...) asparagine glycans are attached at residues Asn-209 and Asn-219. 2 disulfide bridges follow: Cys-254-Cys-275 and Cys-287-Cys-296.

This sequence belongs to the ADP-ribosyl cyclase family. In terms of assembly, homodimer. Expressed at high levels in pancreas, liver, kidney, brain, testis, ovary, placenta, malignant lymphoma and neuroblastoma.

It is found in the cell surface. The protein resides in the membrane. It carries out the reaction 2'-phospho-cyclic ADP-ribose + nicotinate = nicotinate-adenine dinucleotide phosphate. The catalysed reaction is NAD(+) = cyclic ADP-beta-D-ribose + nicotinamide + H(+). The enzyme catalyses NAD(+) + H2O = ADP-D-ribose + nicotinamide + H(+). It catalyses the reaction cyclic ADP-beta-D-ribose + H2O = ADP-D-ribose. It carries out the reaction NADP(+) = 2'-phospho-cyclic ADP-ribose + nicotinamide. The catalysed reaction is nicotinate + NADP(+) = nicotinate-adenine dinucleotide phosphate + nicotinamide. Its activity is regulated as follows. ATP inhibits the cADPR hydrolyzing activity. Its function is as follows. Synthesizes cyclic ADP-ribose (cADPR), a second messenger for glucose-induced insulin secretion. Synthesizes the Ca(2+) mobilizer nicotinate-adenine dinucleotide phosphate, NAADP(+), from 2'-phospho-cADPR and nicotinic acid, as well as from NADP(+) and nicotinic acid. At both pH 5.0 and pH 7.4 preferentially transforms 2'-phospho-cADPR into NAADP(+), while preferentially cleaving NADP(+) to cADPR and ADPRP rather than into NADDP(+). Has cADPR hydrolase activity. The protein is ADP-ribosyl cyclase/cyclic ADP-ribose hydrolase 1 (CD38) of Homo sapiens (Human).